A 287-amino-acid chain; its full sequence is Pyridoxal kinase PdxY (287 aa).

Substrate is bound by residues Ser10 and 45–46; that span reads TQ. ATP contacts are provided by residues Asp112, Ala144, Glu149, Lys182, and 209-212; that span reads RPLV. Asp224 contacts substrate.

Belongs to the pyridoxine kinase family. PdxY subfamily. As to quaternary structure, homodimer. It depends on Mg(2+) as a cofactor.

It catalyses the reaction pyridoxal + ATP = pyridoxal 5'-phosphate + ADP + H(+). The protein operates within cofactor metabolism; pyridoxal 5'-phosphate salvage; pyridoxal 5'-phosphate from pyridoxal: step 1/1. In terms of biological role, pyridoxal kinase involved in the salvage pathway of pyridoxal 5'-phosphate (PLP). Catalyzes the phosphorylation of pyridoxal to PLP. In Shigella sonnei (strain Ss046), this protein is Pyridoxal kinase PdxY.